A 308-amino-acid polypeptide reads, in one-letter code: FGSLLGICLLTQIITGLLLAMHYTADTSLAFTSVAHTCRNVQFGWLIRNLHANGASFFFICIYFHIGRGIYYGSYLNKETWNIGVILLLTLMATAFVGYVLPWGQMSFWGATVITNLFSAIPYIGQTLVEWAWGGFSVDNPTLTRFFALHFLLPFVIAGLTLVHLTFLHETGSNNPLGIPSDCDKIPFHPYYSTKDILGFALMFILLVSLALFSPNSLGDPENFTPANPLSTPPHIKPEWYFLFAYAILRSIPNKLGGVLALAASVLVLFLLPLLHTSKQRSMTFRPLSQILFWALVANLLILTWVGS.

4 helical membrane passes run 1-21 (FGSL…LLAM), 45-66 (WLIR…YFHI), 81-101 (WNIG…GYVL), and 146-166 (FFAL…VHLT). Heme b is bound by residues His51 and His65. Heme b is bound by residues His150 and His164. Position 169 (His169) interacts with a ubiquinone. The next 3 helical transmembrane spans lie at 194–214 (TKDI…ALFS), 256–276 (LGGV…PLLH), and 288–308 (LSQI…WVGS).

The protein belongs to the cytochrome b family. The cytochrome bc1 complex contains 11 subunits: 3 respiratory subunits (MT-CYB, CYC1 and UQCRFS1), 2 core proteins (UQCRC1 and UQCRC2) and 6 low-molecular weight proteins (UQCRH/QCR6, UQCRB/QCR7, UQCRQ/QCR8, UQCR10/QCR9, UQCR11/QCR10 and a cleavage product of UQCRFS1). This cytochrome bc1 complex then forms a dimer. Heme b serves as cofactor.

It is found in the mitochondrion inner membrane. In terms of biological role, component of the ubiquinol-cytochrome c reductase complex (complex III or cytochrome b-c1 complex) that is part of the mitochondrial respiratory chain. The b-c1 complex mediates electron transfer from ubiquinol to cytochrome c. Contributes to the generation of a proton gradient across the mitochondrial membrane that is then used for ATP synthesis. In Baeolophus inornatus (Oak titmouse), this protein is Cytochrome b (MT-CYB).